The chain runs to 124 residues: Fluoride-specific ion channel FluC 1 (124 aa).

A run of 4 helical transmembrane segments spans residues 1–21 (MNWL…YVTD), 30–50 (AVFP…LGLL), 56–76 (AGVA…GALT), and 102–122 (IASV…AQAL). Na(+)-binding residues include glycine 73 and threonine 76.

The protein belongs to the fluoride channel Fluc/FEX (TC 1.A.43) family.

It localises to the cell membrane. It catalyses the reaction fluoride(in) = fluoride(out). Na(+) is not transported, but it plays an essential structural role and its presence is essential for fluoride channel function. Fluoride-specific ion channel. Important for reducing fluoride concentration in the cell, thus reducing its toxicity. This is Fluoride-specific ion channel FluC 1 from Streptomyces avermitilis (strain ATCC 31267 / DSM 46492 / JCM 5070 / NBRC 14893 / NCIMB 12804 / NRRL 8165 / MA-4680).